A 101-amino-acid chain; its full sequence is Small ribosomal subunit protein uS14 (101 aa).

Residues 1–20 (MAKTSAVEKNKRRRKLVANH) are disordered. A compositionally biased stretch (basic residues) spans 10-20 (NKRRRKLVANH).

The protein belongs to the universal ribosomal protein uS14 family. In terms of assembly, part of the 30S ribosomal subunit. Contacts proteins S3 and S10.

Functionally, binds 16S rRNA, required for the assembly of 30S particles and may also be responsible for determining the conformation of the 16S rRNA at the A site. The sequence is that of Small ribosomal subunit protein uS14 from Sinorhizobium medicae (strain WSM419) (Ensifer medicae).